The chain runs to 1197 residues: DNA-directed RNA polymerase subunit beta (1197 aa).

The segment covering 1172-1185 (KEQEEKKAQQEAEK) has biased composition (basic and acidic residues). The tract at residues 1172–1197 (KEQEEKKAQQEAEKAQAASAEDPSAE) is disordered. Residues 1186–1197 (AQAASAEDPSAE) are compositionally biased toward low complexity.

It belongs to the RNA polymerase beta chain family. In terms of assembly, the RNAP catalytic core consists of 2 alpha, 1 beta, 1 beta' and 1 omega subunit. When a sigma factor is associated with the core the holoenzyme is formed, which can initiate transcription.

The enzyme catalyses RNA(n) + a ribonucleoside 5'-triphosphate = RNA(n+1) + diphosphate. Its function is as follows. DNA-dependent RNA polymerase catalyzes the transcription of DNA into RNA using the four ribonucleoside triphosphates as substrates. The chain is DNA-directed RNA polymerase subunit beta from Latilactobacillus sakei subsp. sakei (strain 23K) (Lactobacillus sakei subsp. sakei).